The sequence spans 1106 residues: Probable NAD-specific glutamate dehydrogenase (1106 aa).

Lys654 is an active-site residue.

The protein belongs to the Glu/Leu/Phe/Val dehydrogenases family. In terms of assembly, homotetramer.

It localises to the cytoplasm. The enzyme catalyses L-glutamate + NAD(+) + H2O = 2-oxoglutarate + NH4(+) + NADH + H(+). Its function is as follows. NAD(+)-dependent glutamate dehydrogenase which degrades glutamate to ammonia and alpha-ketoglutarate. This Schizosaccharomyces pombe (strain 972 / ATCC 24843) (Fission yeast) protein is Probable NAD-specific glutamate dehydrogenase (gdh2).